The chain runs to 321 residues: Iron(3+)-hydroxamate-binding protein YxeB (321 aa).

A signal peptide spans M1–A20. C21 is lipidated: N-palmitoyl cysteine. C21 is lipidated: S-diacylglycerol cysteine. A compositionally biased stretch (low complexity) spans T24–S33. The interval T24–G48 is disordered. A Fe/B12 periplasmic-binding domain is found at R58 to A316.

Belongs to the bacterial solute-binding protein 8 family. As to quaternary structure, the complex is composed of an ATP-binding protein (FhuC), two transmembrane proteins (FhuB and FhuG) and a solute-binding protein (FhuD or YxeB).

It is found in the cell membrane. Its subcellular location is the membrane raft. Functionally, part of the ABC transporter complex FhuCBGD involved in iron(3+)-hydroxamate import. Binds the iron(3+)-hydroxamate complex and transfers it to the membrane-bound permease. Partially required for the transport of desferrioxamine. The polypeptide is Iron(3+)-hydroxamate-binding protein YxeB (yxeB) (Bacillus subtilis (strain 168)).